A 455-amino-acid chain; its full sequence is Putative O-acetyltransferase SAT14 (455 aa).

This sequence belongs to the lysine N-acyltransferase MbtK family.

Its pathway is mycotoxin biosynthesis. Its function is as follows. Putative O-acetyltransferase; part of the satratoxin SC2 cluster involved in the biosynthesis of satratoxins, trichothecene mycotoxins that are associated with human food poisonings. Satratoxins are suggested to be made by products of multiple gene clusters (SC1, SC2 and SC3) that encode 21 proteins in all, including polyketide synthases, acetyltransferases, and other enzymes expected to modify the trichothecene skeleton. SC1 encodes 10 proteins, SAT1 to SAT10. The largest are SAT8, which encodes a putative polyketide synthase (PKS) with a conventional non-reducing architecture, and SAT10, a putative protein containing four ankyrin repeats and thus may be involved in protein scaffolding. The putative short-chain reductase SAT3 may assist the PKS in some capacity. SAT6 contains a secretory lipase domain and acts probably as a trichothecene esterase. SAT5 encodes a putative acetyltransferase, and so, with SAT6, may affect endogenous protection from toxicity. The probable transcription factor SAT9 may regulate the expression of the SC1 cluster. SC2 encodes proteins SAT11 to SAT16, the largest of which encodes the putative reducing PKS SAT13. SAT11 is a cytochrome P450 monooxygenase, while SAT14 and SAT16 are probable acetyltransferases. The SC2 cluster may be regulated by the transcription factor SAT15. SC3 is a small cluster that encodes 5 proteins, SAT17 to SAT21. SAT21 is a putative MFS-type transporter which may have a role in exporting secondary metabolites. The four other proteins putatively encoded in SC3 include the taurine hydroxylase-like protein SAT17, the O-methyltransferase SAT18, the acetyltransferase SAT19, and the Cys6-type zinc finger SAT20, the latter being probably involved in regulation of SC3 expression. The protein is Putative O-acetyltransferase SAT14 of Stachybotrys chartarum (strain CBS 109288 / IBT 7711) (Toxic black mold).